Here is a 356-residue protein sequence, read N- to C-terminus: Peptide chain release factor 1 (356 aa).

Gln233 is subject to N5-methylglutamine.

This sequence belongs to the prokaryotic/mitochondrial release factor family. Post-translationally, methylated by PrmC. Methylation increases the termination efficiency of RF1.

It is found in the cytoplasm. In terms of biological role, peptide chain release factor 1 directs the termination of translation in response to the peptide chain termination codons UAG and UAA. The protein is Peptide chain release factor 1 of Shouchella clausii (strain KSM-K16) (Alkalihalobacillus clausii).